Consider the following 431-residue polypeptide: Serine--tRNA ligase (431 aa).

Residue 237–239 (TAE) coordinates L-serine. 268 to 270 (RSE) serves as a coordination point for ATP. Residue Glu-291 participates in L-serine binding. 355-358 (EISS) contacts ATP. Ser-390 is a binding site for L-serine.

This sequence belongs to the class-II aminoacyl-tRNA synthetase family. Type-1 seryl-tRNA synthetase subfamily. As to quaternary structure, homodimer. The tRNA molecule binds across the dimer.

It is found in the cytoplasm. It catalyses the reaction tRNA(Ser) + L-serine + ATP = L-seryl-tRNA(Ser) + AMP + diphosphate + H(+). The enzyme catalyses tRNA(Sec) + L-serine + ATP = L-seryl-tRNA(Sec) + AMP + diphosphate + H(+). Its pathway is aminoacyl-tRNA biosynthesis; selenocysteinyl-tRNA(Sec) biosynthesis; L-seryl-tRNA(Sec) from L-serine and tRNA(Sec): step 1/1. Functionally, catalyzes the attachment of serine to tRNA(Ser). Is also able to aminoacylate tRNA(Sec) with serine, to form the misacylated tRNA L-seryl-tRNA(Sec), which will be further converted into selenocysteinyl-tRNA(Sec). The protein is Serine--tRNA ligase of Neisseria gonorrhoeae (strain NCCP11945).